Consider the following 248-residue polypeptide: MFSLALRARATGLAAQWGRHARNLHKTAVHNGAGGALFVHRDTPENNPDTPFDFTPENYKRIEAIVKNYPEGHQAAAVLPVLDLAQRQNGWLPISAMNKVAEVLQVPPMRVYEVATFYTMYNRKPVGKYHIQVCTTTPCMLRDSDSILETLQRKLGIKVGETTPDKLFTLIEVECLGACVNAPMVQINDNYYEDLTPKDIEEIIDELKAGKVPKPGPRSGRFCCEPAGGLTSLTEPPKGPGFGVQAGL.

A mitochondrion-targeting transit peptide spans 1-31 (MFSLALRARATGLAAQWGRHARNLHKTAVHN). At lysine 60 the chain carries N6-acetyllysine. [2Fe-2S] cluster-binding residues include cysteine 134, cysteine 139, cysteine 175, and cysteine 179. Tyrosine 192 is subject to Phosphotyrosine; by SRC. The segment at 229-248 (GLTSLTEPPKGPGFGVQAGL) is disordered.

This sequence belongs to the complex I 24 kDa subunit family. Core subunit of respiratory chain NADH dehydrogenase (Complex I) which is composed of 45 different subunits. This is a component of the flavoprotein-sulfur (FP) fragment of the enzyme. [2Fe-2S] cluster is required as a cofactor.

The protein localises to the mitochondrion inner membrane. The enzyme catalyses a ubiquinone + NADH + 5 H(+)(in) = a ubiquinol + NAD(+) + 4 H(+)(out). Core subunit of the mitochondrial membrane respiratory chain NADH dehydrogenase (Complex I) which catalyzes electron transfer from NADH through the respiratory chain, using ubiquinone as an electron acceptor. Parts of the peripheral arm of the enzyme, where the electrons from NADH are accepted by flavin mononucleotide (FMN) and then passed along a chain of iron-sulfur clusters by electron tunnelling to the final acceptor ubiquinone. Contains one iron-sulfur cluster. In Mus musculus (Mouse), this protein is NADH dehydrogenase [ubiquinone] flavoprotein 2, mitochondrial.